A 152-amino-acid chain; its full sequence is Small ribosomal subunit protein uS15 (152 aa).

Over residues 1–11 the composition is skewed to basic residues; the sequence is MARMHARRRGK. A disordered region spans residues 1–25; it reads MARMHARRRGKSSSVRPARNEAPAW.

Belongs to the universal ribosomal protein uS15 family. Part of the 30S ribosomal subunit.

The polypeptide is Small ribosomal subunit protein uS15 (Methanoregula boonei (strain DSM 21154 / JCM 14090 / 6A8)).